The chain runs to 167 residues: 3-isopropylmalate dehydratase small subunit (167 aa).

Belongs to the LeuD family. LeuD type 2 subfamily. In terms of assembly, heterodimer of LeuC and LeuD.

It catalyses the reaction (2R,3S)-3-isopropylmalate = (2S)-2-isopropylmalate. Its pathway is amino-acid biosynthesis; L-leucine biosynthesis; L-leucine from 3-methyl-2-oxobutanoate: step 2/4. Its function is as follows. Catalyzes the isomerization between 2-isopropylmalate and 3-isopropylmalate, via the formation of 2-isopropylmaleate. This chain is 3-isopropylmalate dehydratase small subunit, found in Sulfurimonas denitrificans (strain ATCC 33889 / DSM 1251) (Thiomicrospira denitrificans (strain ATCC 33889 / DSM 1251)).